A 449-amino-acid polypeptide reads, in one-letter code: MELETHLSKYFTLAFTHKSMSLEMREKLAINSNATLKEFLQTIKNHCPNIKECMVLSTCNRFEIYASLKHGANTNEQKNALLKILAQNKKMSVSDLEKCVLMNTDESAVHHVFSVCSSLDSLVVGETQITGQMKNAYKFAFEEKFCSKDLTRLLHFAFKCAAKVRNLTGISKQGVSISSVAVKEALNIFEKERIKDKKALVIGLGEMAQLVIKHLLNKQFEALILGRNAAKFEDFIKELEEPKKVSFQNIENLNAYINEYELLFCATSSPHFIVQNRMLKETIFRRFWFDLAVPRNIEKPVLDNIFLYSVDDLEPMVRENVENRQESRMRAYEIVGLATMEFYQWIQSLEVEPVIKDLRELARISAQKELQKALKKRYVPKEYENNIEKILHNAFNTFLHNPTIALKKNAQKEESDVLVGAIKNLFNLDKSNANHAQNLNLYKCEYYEE.

Residues 58 to 61 (TCNR), S121, 126 to 128 (ETQ), and Q132 contribute to the substrate site. Catalysis depends on C59, which acts as the Nucleophile. 203-208 (GLGEMA) contributes to the NADP(+) binding site.

This sequence belongs to the glutamyl-tRNA reductase family. Homodimer.

The enzyme catalyses (S)-4-amino-5-oxopentanoate + tRNA(Glu) + NADP(+) = L-glutamyl-tRNA(Glu) + NADPH + H(+). Its pathway is porphyrin-containing compound metabolism; protoporphyrin-IX biosynthesis; 5-aminolevulinate from L-glutamyl-tRNA(Glu): step 1/2. Its function is as follows. Catalyzes the NADPH-dependent reduction of glutamyl-tRNA(Glu) to glutamate 1-semialdehyde (GSA). This is Glutamyl-tRNA reductase from Helicobacter pylori (strain ATCC 700392 / 26695) (Campylobacter pylori).